We begin with the raw amino-acid sequence, 292 residues long: Sulfofructosephosphate aldolase (292 aa).

Residue Lys193 is the Schiff-base intermediate with substrate of the active site.

This sequence belongs to the aldolase LacD family. As to quaternary structure, homotetramer.

It catalyses the reaction 6-deoxy-6-sulfo-D-fructose 1-phosphate = (2S)-3-sulfolactaldehyde + dihydroxyacetone phosphate. Functionally, cleaves 6-deoxy-6-sulfo-D-fructose 1-phosphate (SFP) to form dihydroxyacetone phosphate (DHAP) and 3-sulfolactaldehyde (SLA). In Escherichia coli (strain K12), this protein is Sulfofructosephosphate aldolase (yihT).